A 124-amino-acid polypeptide reads, in one-letter code: CLAVATA3/ESR (CLE)-related protein 45 (124 aa).

An N-terminal signal peptide occupies residues 1 to 20 (MLGSSTRSMFFLLVCIGLLA). N-linked (GlcNAc...) asparagine glycosylation is found at asparagine 25 and asparagine 96. Positions 71–109 (LNKNRRVLEEVNKDKIKAEETQERKNKTEDSFKSSKRRV) form a coiled coil. Residues 87 to 103 (KAEETQERKNKTEDSFK) show a composition bias toward basic and acidic residues. The interval 87–124 (KAEETQERKNKTEDSFKSSKRRVRRGSDPIHNKAQPFS) is disordered.

It belongs to the CLV3/ESR signal peptide family. As to quaternary structure, binds to SKM1 present in the pollen grain, particularly under relatively high temperature (at 30 degrees Celsius). Interacts with BAM3, especially in roots. In terms of tissue distribution, expressed at low levels in flowers, especially in pistils. Present in vascular tissues. In roots, confined to protophloem and sieve element precursor cells.

It localises to the secreted. It is found in the extracellular space. Extracellular signal peptide that regulates cell fate. Represses root apical meristem maintenance. Represses protophloem differentiation in a BAM3-dependent manner. BRX, BAM3, and CLE45 act together to regulate the transition of protophloem cells from proliferation to differentiation, thus impinging on postembryonic growth capacity of the root meristem; this signaling pathway requires CRN and CLV2 and involves MAKR5 for its transduction/amplification. Triggers the accumulation of MAKR5 in developing sieve elements in a BAM3-dependent manner. Prevents, in a dose-dependent manner, auxin response in the root meristem thus leading in the repression of protophloem differentiation and periclinal sieve element precursor cell division. Promotes pollen tube growth prolongation in a SKM1 and SKM2-dependent manner, especially under relatively high temperature (at 30 degrees Celsius), thus conferring tolerance against high temperature probably through the maintenance of mitochondrial activity. Alleviates mitochondrial decay pollen tube in vitro culture. This Arabidopsis thaliana (Mouse-ear cress) protein is CLAVATA3/ESR (CLE)-related protein 45.